Consider the following 556-residue polypeptide: Phenylalanine--tRNA ligase beta subunit (556 aa).

Residues 278–353 enclose the B5 domain; that stretch reads LTPKRFEVEL…IAYGYNNIEP (76 aa). Mg(2+)-binding residues include Asp-331, Asp-337, Glu-340, and Asp-341.

It belongs to the phenylalanyl-tRNA synthetase beta subunit family. Type 2 subfamily. In terms of assembly, tetramer of two alpha and two beta subunits. Requires Mg(2+) as cofactor.

The protein localises to the cytoplasm. The enzyme catalyses tRNA(Phe) + L-phenylalanine + ATP = L-phenylalanyl-tRNA(Phe) + AMP + diphosphate + H(+). This is Phenylalanine--tRNA ligase beta subunit from Pyrococcus abyssi (strain GE5 / Orsay).